Reading from the N-terminus, the 205-residue chain is Peptidyl-tRNA hydrolase (205 aa).

TRNA is bound at residue Y14. Residue H19 is the Proton acceptor of the active site. TRNA-binding residues include Y68, N70, and N116.

This sequence belongs to the PTH family. In terms of assembly, monomer.

The protein resides in the cytoplasm. It carries out the reaction an N-acyl-L-alpha-aminoacyl-tRNA + H2O = an N-acyl-L-amino acid + a tRNA + H(+). Its function is as follows. Hydrolyzes ribosome-free peptidyl-tRNAs (with 1 or more amino acids incorporated), which drop off the ribosome during protein synthesis, or as a result of ribosome stalling. In terms of biological role, catalyzes the release of premature peptidyl moieties from peptidyl-tRNA molecules trapped in stalled 50S ribosomal subunits, and thus maintains levels of free tRNAs and 50S ribosomes. The protein is Peptidyl-tRNA hydrolase of Caulobacter vibrioides (strain ATCC 19089 / CIP 103742 / CB 15) (Caulobacter crescentus).